A 214-amino-acid chain; its full sequence is Ribonuclease HII (214 aa).

Residues 26–214 (EIVCGVDEAG…PVRAALDLIR (189 aa)) form the RNase H type-2 domain. Positions 32, 33, and 124 each coordinate a divalent metal cation.

The protein belongs to the RNase HII family. Mn(2+) is required as a cofactor. The cofactor is Mg(2+).

The protein localises to the cytoplasm. The catalysed reaction is Endonucleolytic cleavage to 5'-phosphomonoester.. Its function is as follows. Endonuclease that specifically degrades the RNA of RNA-DNA hybrids. This chain is Ribonuclease HII, found in Burkholderia lata (strain ATCC 17760 / DSM 23089 / LMG 22485 / NCIMB 9086 / R18194 / 383).